Consider the following 523-residue polypeptide: Ribonuclease Y (523 aa).

Residues 3-23 traverse the membrane as a helical segment; sequence VWYAIGSIIFGLLVGVSVYLI. The 67-residue stretch at 213–279 folds into the KH domain; sequence LVNVINLPND…TKTIEKLVED (67 aa). The region spanning 339 to 432 is the HD domain; sequence ALGHSIEVAN…VCAADTLSAA (94 aa).

Belongs to the RNase Y family.

Its subcellular location is the cell membrane. Functionally, endoribonuclease that initiates mRNA decay. The polypeptide is Ribonuclease Y (Helicobacter hepaticus (strain ATCC 51449 / 3B1)).